Here is a 689-residue protein sequence, read N- to C-terminus: Glycine--tRNA ligase beta subunit (689 aa).

The protein belongs to the class-II aminoacyl-tRNA synthetase family. As to quaternary structure, tetramer of two alpha and two beta subunits.

Its subcellular location is the cytoplasm. It catalyses the reaction tRNA(Gly) + glycine + ATP = glycyl-tRNA(Gly) + AMP + diphosphate. The protein is Glycine--tRNA ligase beta subunit of Citrobacter koseri (strain ATCC BAA-895 / CDC 4225-83 / SGSC4696).